Here is a 291-residue protein sequence, read N- to C-terminus: Formamidopyrimidine-DNA glycosylase (291 aa).

Catalysis depends on P2, which acts as the Schiff-base intermediate with DNA. E3 functions as the Proton donor in the catalytic mechanism. Catalysis depends on K58, which acts as the Proton donor; for beta-elimination activity. DNA is bound by residues H104, R123, and K166. Residues K257–K291 form an FPG-type zinc finger. R281 serves as the catalytic Proton donor; for delta-elimination activity.

The protein belongs to the FPG family. As to quaternary structure, monomer. Requires Zn(2+) as cofactor.

The catalysed reaction is Hydrolysis of DNA containing ring-opened 7-methylguanine residues, releasing 2,6-diamino-4-hydroxy-5-(N-methyl)formamidopyrimidine.. It carries out the reaction 2'-deoxyribonucleotide-(2'-deoxyribose 5'-phosphate)-2'-deoxyribonucleotide-DNA = a 3'-end 2'-deoxyribonucleotide-(2,3-dehydro-2,3-deoxyribose 5'-phosphate)-DNA + a 5'-end 5'-phospho-2'-deoxyribonucleoside-DNA + H(+). Involved in base excision repair of DNA damaged by oxidation or by mutagenic agents. Acts as a DNA glycosylase that recognizes and removes damaged bases. Has a preference for oxidized purines, such as 7,8-dihydro-8-oxoguanine (8-oxoG). Has AP (apurinic/apyrimidinic) lyase activity and introduces nicks in the DNA strand. Cleaves the DNA backbone by beta-delta elimination to generate a single-strand break at the site of the removed base with both 3'- and 5'-phosphates. This chain is Formamidopyrimidine-DNA glycosylase, found in Rhodopseudomonas palustris (strain TIE-1).